We begin with the raw amino-acid sequence, 356 residues long: Protein-arginine kinase (356 aa).

The 231-residue stretch at 24-254 folds into the Phosphagen kinase C-terminal domain; that stretch reads IVLSTRIRLA…HQLIQQEKAA (231 aa). ATP is bound by residues 27 to 31, histidine 92, arginine 125, 176 to 180, and 207 to 212; these read STRIR, RASVM, and RGIYGE. Residues 337–342 carry the RDXXRA motif of the pArg binding pocket involved in allosteric regulation motif; that stretch reads RDYRRA.

This sequence belongs to the ATP:guanido phosphotransferase family.

The catalysed reaction is L-arginyl-[protein] + ATP = N(omega)-phospho-L-arginyl-[protein] + ADP + H(+). Its activity is regulated as follows. Appears to be allosterically activated by the binding of pArg-containing polypeptides to the pArg-binding pocket localized in the C-terminal domain of McsB. Functionally, catalyzes the specific phosphorylation of arginine residues in a large number of proteins. Is part of the bacterial stress response system. Protein arginine phosphorylation has a physiologically important role and is involved in the regulation of many critical cellular processes, such as protein homeostasis, motility, competence, and stringent and stress responses, by regulating gene expression and protein activity. In Bacillus cytotoxicus (strain DSM 22905 / CIP 110041 / 391-98 / NVH 391-98), this protein is Protein-arginine kinase.